Reading from the N-terminus, the 466-residue chain is Coagulation factor VII (466 aa).

The signal sequence occupies residues 1 to 20 (MVSQALRLLCLLLGLQGCLA). A propeptide spanning residues 21-60 (AGGVAKASGGETRDMPWKPGPHRVFVTQEEAHGVLHRRRR) is cleaved from the precursor. One can recognise a Gla domain in the interval 61-105 (ANAFLEELRPGSLERECKEEQCSFEEAREIFKDAERTKLFWISYS). 10 positions are modified to 4-carboxyglutamate: Glu66, Glu67, Glu74, Glu76, Glu79, Glu80, Glu85, Glu86, Glu89, and Glu95. Cys77 and Cys82 form a disulfide bridge. The region spanning 106–142 (DGDQCASSPCQNGGSCKDQLQSYICFCLPAFEGRNCE) is the EGF-like 1; calcium-binding domain. Disulfide bonds link Cys110/Cys121, Cys115/Cys130, Cys132/Cys141, Cys151/Cys162, Cys158/Cys172, Cys174/Cys187, Cys195/Cys322, Cys219/Cys224, Cys238/Cys254, and Cys370/Cys389. O-linked (Glc...) serine; alternate glycosylation occurs at Ser112. An O-linked (Xyl...) serine; alternate glycan is attached at Ser112. O-linked (Fuc) serine glycosylation occurs at Ser120. Asp123 carries the post-translational modification (3R)-3-hydroxyaspartate. The region spanning 147-188 (DQLICVNENGGCEQYCSDHTGTKRSCRCHEGYSLLADGVSCT) is the EGF-like 2 domain. Asn205 carries N-linked (GlcNAc...) asparagine glycosylation. A Peptidase S1 domain is found at 213–452 (IVGGKVCPKG…YIEWLQKLMR (240 aa)). Active-site charge relay system residues include His253 and Asp302. Asn382 carries N-linked (GlcNAc...) asparagine glycosylation. Asp398 contributes to the substrate binding site. Cys400 and Cys428 form a disulfide bridge. Ser404 functions as the Charge relay system in the catalytic mechanism.

It belongs to the peptidase S1 family. As to quaternary structure, heterodimer of a light chain and a heavy chain linked by a disulfide bond. Interacts (activated) with iripin-8, a serine protease inhibitor from Ixodes ricinus saliva. In terms of processing, the vitamin K-dependent, enzymatic carboxylation of some glutamate residues allows the modified protein to bind calcium. The iron and 2-oxoglutarate dependent 3-hydroxylation of aspartate and asparagine is (R) stereospecific within EGF domains. Post-translationally, O- and N-glycosylated. N-glycosylation at Asn-205 occurs cotranslationally and is mediated by STT3A-containing complexes, while glycosylation at Asn-382 is post-translational and is mediated STT3B-containing complexes before folding. O-fucosylated by POFUT1 on a conserved serine or threonine residue found in the consensus sequence C2-X(4,5)-[S/T]-C3 of EGF domains, where C2 and C3 are the second and third conserved cysteines. In terms of processing, can be either O-glucosylated or O-xylosylated at Ser-112 by POGLUT1 in vitro. Plasma.

Its subcellular location is the secreted. The enzyme catalyses Selective cleavage of Arg-|-Ile bond in factor X to form factor Xa.. Its function is as follows. Initiates the extrinsic pathway of blood coagulation. Serine protease that circulates in the blood in a zymogen form. Factor VII is converted to factor VIIa by factor Xa, factor XIIa, factor IXa, or thrombin by minor proteolysis. In the presence of tissue factor and calcium ions, factor VIIa then converts factor X to factor Xa by limited proteolysis. Factor VIIa also converts factor IX to factor IXa in the presence of tissue factor and calcium. This chain is Coagulation factor VII (F7), found in Homo sapiens (Human).